The chain runs to 159 residues: Neuroglobin-2 (159 aa).

One can recognise a Globin domain in the interval Lys-3–Ala-151. Heme b contacts are provided by His-66 and His-98.

Belongs to the globin family. In terms of assembly, monomer. Homodimers and homotetramers. Mainly monomeric but also detected as part of homodimers and homotetramers.

Its subcellular location is the cytoplasm. The protein resides in the cytosol. It is found in the mitochondrion matrix. It catalyses the reaction Fe(III)-heme b-[protein] + nitric oxide + H2O = Fe(II)-heme b-[protein] + nitrite + 2 H(+). Functionally, monomeric globin with a bis-histidyl six-coordinate heme-iron atom through which it can bind dioxygen, carbon monoxide and nitric oxide. Could help transport oxygen and increase its availability to the metabolically active neuronal tissues, though its low quantity in tissues as well as its high affinity for dioxygen, which may limit its oxygen-releasing ability, argue against it. The ferrous/deoxygenated form exhibits a nitrite reductase activity and it could produce nitric oxide which in turn inhibits cellular respiration in response to hypoxia. In its ferrous/deoxygenated state, it may also exhibit GDI (Guanine nucleotide Dissociation Inhibitor) activity toward heterotrimeric G-alpha proteins, thereby regulating signal transduction to facilitate neuroprotective responses in the wake of hypoxia and associated oxidative stress. This Oncorhynchus mykiss (Rainbow trout) protein is Neuroglobin-2 (ngb2).